A 138-amino-acid polypeptide reads, in one-letter code: Large ribosomal subunit protein uL16 (138 aa).

Over residues 1–17 (MLIPRKVKHRKQHHPRQ) the composition is skewed to basic residues. The interval 1–22 (MLIPRKVKHRKQHHPRQRGIAS) is disordered.

Belongs to the universal ribosomal protein uL16 family. Part of the 50S ribosomal subunit.

Binds 23S rRNA and is also seen to make contacts with the A and possibly P site tRNAs. The polypeptide is Large ribosomal subunit protein uL16 (Mycobacterium tuberculosis (strain ATCC 25177 / H37Ra)).